The following is a 456-amino-acid chain: tRNA modification GTPase MnmE (456 aa).

The (6S)-5-formyl-5,6,7,8-tetrahydrofolate site is built by R24, E81, and K120. A TrmE-type G domain is found at 216–379 (GMTVVIAGRP…LRDHLKACMG (164 aa)). Position 226 (N226) interacts with K(+). GTP contacts are provided by residues 226 to 231 (NAGKSS), 245 to 251 (TDIAGTT), 270 to 273 (DTAG), 335 to 338 (NKAD), and 359 to 361 (SAR). S230 contacts Mg(2+). 3 residues coordinate K(+): T245, I247, and T250. T251 is a binding site for Mg(2+). K456 serves as a coordination point for (6S)-5-formyl-5,6,7,8-tetrahydrofolate.

Belongs to the TRAFAC class TrmE-Era-EngA-EngB-Septin-like GTPase superfamily. TrmE GTPase family. As to quaternary structure, homodimer. Heterotetramer of two MnmE and two MnmG subunits. K(+) serves as cofactor.

It is found in the cytoplasm. Its function is as follows. Exhibits a very high intrinsic GTPase hydrolysis rate. Involved in the addition of a carboxymethylaminomethyl (cmnm) group at the wobble position (U34) of certain tRNAs, forming tRNA-cmnm(5)s(2)U34. In Pseudomonas entomophila (strain L48), this protein is tRNA modification GTPase MnmE.